Here is a 64-residue protein sequence, read N- to C-terminus: Alpha-conotoxin-like Ac1.1b (64 aa).

The signal sequence occupies residues Met1–Ser21. A propeptide spanning residues Phe22–Arg47 is cleaved from the precursor. The interval Pro23 to Lys46 is disordered. Residues Ser28–Lys44 are compositionally biased toward basic and acidic residues. 2 disulfides stabilise this stretch: Cys51–Cys56 and Cys52–Cys62. Cys62 is subject to Cysteine amide.

Belongs to the conotoxin A superfamily. Expressed by the venom duct.

It is found in the secreted. Functionally, alpha-conotoxins act on postsynaptic membranes, they bind to the nicotinic acetylcholine receptors (nAChR) and thus inhibit them. The chain is Alpha-conotoxin-like Ac1.1b from Conus achatinus (Little frog cone).